A 227-amino-acid polypeptide reads, in one-letter code: PKHD-type hydroxylase Patl_2273 (227 aa).

Residues 78 to 178 enclose the Fe2OG dioxygenase domain; sequence KIYPPKFNRY…RTASFFWIES (101 aa). Fe cation is bound by residues H96, D98, and H159. Residue R169 coordinates 2-oxoglutarate.

It depends on Fe(2+) as a cofactor. Requires L-ascorbate as cofactor.

This Pseudoalteromonas atlantica (strain T6c / ATCC BAA-1087) protein is PKHD-type hydroxylase Patl_2273.